The sequence spans 116 residues: Mercuric transport protein MerT (116 aa).

2 helical membrane-spanning segments follow: residues 16–36 and 46–66; these read LAAI…ALGF and VLEP…FFAW. Cys24 and Cys25 together coordinate Hg(2+). Residues Cys76 and Cys82 each coordinate Hg(2+). A helical membrane pass occupies residues 94-114; that stretch reads IFWVVAALVLVALGFPYVMPF.

The protein belongs to the MerT family.

The protein localises to the cell inner membrane. In terms of biological role, involved in mercury resistance. Probably transfers a mercuric ion from the periplasmic Hg(2+)-binding protein MerP to the cytoplasmic mercuric reductase MerA. This is Mercuric transport protein MerT from Serratia marcescens.